The sequence spans 716 residues: Exocyst complex component 8 (716 aa).

Position 15 is a phosphoserine (S15). The segment at 129–150 (GFLPGPAGVPREGSGTGEEGKQ) is disordered. The PH domain occupies 173-273 (YLVYNGDLVE…WLEVLEETKR (101 aa)). Over residues 275–284 (LSDKRRREQE) the composition is skewed to basic and acidic residues. The interval 275–319 (LSDKRRREQEEAAAPRAPPPVTSKGSNPFEDEDDEELATPEAEEE) is disordered. Acidic residues predominate over residues 303-319 (FEDEDDEELATPEAEEE). T313 is subject to Phosphothreonine.

The protein belongs to the EXO84 family. The exocyst complex is composed of EXOC1, EXOC2, EXOC3, EXOC4, EXOC5, EXOC6, EXOC7 and EXOC8. Interacts (via PH domain) with GTP-bound RALA and RALB. Interacts with SH3BP1; required for the localization of both SH3BP1 and the exocyst to the leading edge of migrating cells.

Its subcellular location is the cytoplasm. It is found in the perinuclear region. It localises to the cell projection. The protein localises to the growth cone. Component of the exocyst complex involved in the docking of exocytic vesicles with fusion sites on the plasma membrane. In Mus musculus (Mouse), this protein is Exocyst complex component 8 (Exoc8).